Here is a 335-residue protein sequence, read N- to C-terminus: 2,4-dienoyl-CoA reductase [(3E)-enoyl-CoA-producing], mitochondrial (335 aa).

The transit peptide at 1-34 (MALLGRAFFAGVSRLPCDPGPQRFFSFGTKTLYQ) directs the protein to the mitochondrion. An N6-acetyllysine; alternate mark is found at lysine 42 and lysine 49. Residues lysine 42 and lysine 49 each carry the N6-succinyllysine; alternate modification. 66–71 (GGGTGL) contributes to the NADP(+) binding site. At threonine 69 the chain carries Phosphothreonine. The residue at position 73 (lysine 73) is an N6-succinyllysine. NADP(+) is bound at residue arginine 91. Arginine 91 lines the substrate pocket. N6-acetyllysine; alternate occurs at positions 97 and 106. N6-succinyllysine; alternate is present on residues lysine 97 and lysine 106. Residue aspartate 117 participates in NADP(+) binding. The substrate site is built by arginine 119 and phenylalanine 149. Tyrosine 199 acts as the Proton acceptor in catalysis. NADP(+)-binding positions include lysine 214 and 240–243 (PGPI). Position 244 is an N6-acetyllysine; alternate (lysine 244). N6-succinyllysine; alternate is present on lysine 244. Arginine 251 lines the substrate pocket. Lysine 260 is modified (N6-acetyllysine; alternate). Lysine 260 is modified (N6-succinyllysine; alternate). At lysine 315 the chain carries N6-acetyllysine. Lysine 319 carries the post-translational modification N6-acetyllysine; alternate. Lysine 319 is subject to N6-succinyllysine; alternate.

This sequence belongs to the short-chain dehydrogenases/reductases (SDR) family. 2,4-dienoyl-CoA reductase subfamily. Homotetramer.

It is found in the mitochondrion. It catalyses the reaction a (2E,4E)-dienoyl-CoA + NADPH + H(+) = a 4,5-saturated-(3E)-enoyl-CoA + NADP(+). The enzyme catalyses a (2E,4Z)-dienoyl-CoA + NADPH + H(+) = a 4,5-saturated-(3E)-enoyl-CoA + NADP(+). It carries out the reaction (2E,4E)-hexadienoyl-CoA + NADPH + H(+) = (3E)-hexenoyl-CoA + NADP(+). In terms of biological role, auxiliary enzyme of beta-oxidation. It participates in the metabolism of unsaturated fatty enoyl-CoA esters having double bonds in both even- and odd-numbered positions in mitochondria. Catalyzes the NADP-dependent reduction of 2,4-dienoyl-CoA to yield trans-3-enoyl-CoA. The polypeptide is 2,4-dienoyl-CoA reductase [(3E)-enoyl-CoA-producing], mitochondrial (Decr1) (Mus musculus (Mouse)).